A 65-amino-acid chain; its full sequence is uncharacterized protein (65 aa).

The protein resides in the plastid. Its subcellular location is the chloroplast. This is an uncharacterized protein from Guillardia theta (Cryptophyte).